The sequence spans 37 residues: Photosystem I reaction center subunit VIII (37 aa).

A helical membrane pass occupies residues 10–30 (IFVPLVGLVFPAIAMASLSLY).

The protein belongs to the PsaI family.

The protein resides in the plastid. The protein localises to the chloroplast thylakoid membrane. May help in the organization of the PsaL subunit. In Gossypium barbadense (Sea Island cotton), this protein is Photosystem I reaction center subunit VIII.